The primary structure comprises 445 residues: Methionine aminopeptidase 2 (445 aa).

A disordered region spans residues 1-80 (MAAQVASGVG…TSKVQTEPPR (80 aa)). Residues 57–71 (AKKKKKKTKKKKKGT) are compositionally biased toward basic residues. H195 serves as a coordination point for substrate. A divalent metal cation-binding residues include D215, D226, and H295. H303 serves as a coordination point for substrate. The a divalent metal cation site is built by E331 and E426.

Belongs to the peptidase M24A family. Methionine aminopeptidase eukaryotic type 2 subfamily. Co(2+) serves as cofactor. Requires Zn(2+) as cofactor. The cofactor is Mn(2+). It depends on Fe(2+) as a cofactor.

It is found in the cytoplasm. The catalysed reaction is Release of N-terminal amino acids, preferentially methionine, from peptides and arylamides.. Cotranslationally removes the N-terminal methionine from nascent proteins. The N-terminal methionine is often cleaved when the second residue in the primary sequence is small and uncharged (Met-Ala-, Cys, Gly, Pro, Ser, Thr, or Val). This chain is Methionine aminopeptidase 2, found in Paracoccidioides brasiliensis (strain Pb18).